The chain runs to 198 residues: Ras-related protein RabH (198 aa).

GTP is bound at residue 14-21 (GDWNVGKS). The Effector region motif lies at 36–44 (TKLSMGEHF). GTP-binding positions include 62–66 (DTSGM) and 120–123 (SKFD). Cys-195 bears the Cysteine methyl ester mark. Cys-195 is lipidated: S-geranylgeranyl cysteine. The propeptide at 196–198 (SIN) is removed in mature form.

Belongs to the small GTPase superfamily. Rab family.

The protein localises to the cell membrane. In Dictyostelium discoideum (Social amoeba), this protein is Ras-related protein RabH (rabH).